A 914-amino-acid polypeptide reads, in one-letter code: DENN domain-containing protein 2C (914 aa).

Residues 46 to 98 (FGVRYNCHQESPPHKRPTGEERNGALPRNTDVKSRDQSEDEGEGGECRGSHPS) form a disordered region. Basic and acidic residues predominate over residues 56 to 68 (SPPHKRPTGEERN). At Ser261 the chain carries Phosphoserine. The disordered stretch occupies residues 411-446 (GKKRVKLQPYTGKEAPSSKGETSGNESDAEYLPKNR). The 148-residue stretch at 480–627 (ELFVVVSLQK…PFPAPGRTIT (148 aa)) folds into the uDENN domain. A cDENN domain is found at 649-782 (RLEHVDFECL…LQAALVQILE (134 aa)). Positions 784–874 (RDEVLAQEQQ…QDRELRQSGV (91 aa)) constitute a dDENN domain.

Its function is as follows. Guanine nucleotide exchange factor (GEF) which may activate RAB9A and RAB9B. Promotes the exchange of GDP to GTP, converting inactive GDP-bound Rab proteins into their active GTP-bound form. The polypeptide is DENN domain-containing protein 2C (Dennd2c) (Mus musculus (Mouse)).